Reading from the N-terminus, the 89-residue chain is MSVAEIKKSDVVAQFARGANDTGSPEVQVALLTTRINELTVHFKAHTKDHHSRRGLLRMVSRRRKLLDYLKGKDADRYRALIEKLGLRK.

The protein belongs to the universal ribosomal protein uS15 family. In terms of assembly, part of the 30S ribosomal subunit. Forms a bridge to the 50S subunit in the 70S ribosome, contacting the 23S rRNA.

Functionally, one of the primary rRNA binding proteins, it binds directly to 16S rRNA where it helps nucleate assembly of the platform of the 30S subunit by binding and bridging several RNA helices of the 16S rRNA. Forms an intersubunit bridge (bridge B4) with the 23S rRNA of the 50S subunit in the ribosome. The chain is Small ribosomal subunit protein uS15 from Paraburkholderia phymatum (strain DSM 17167 / CIP 108236 / LMG 21445 / STM815) (Burkholderia phymatum).